The sequence spans 112 residues: Lutropin subunit beta (112 aa).

Cystine bridges form between C4-C52, C18-C67, C21-C105, C29-C83, C33-C85, and C88-C95. A glycan (N-linked (GlcNAc...) asparagine) is linked at N8.

Belongs to the glycoprotein hormones subunit beta family. As to quaternary structure, heterodimer of a common alpha chain and a unique beta chain which confers biological specificity to thyrotropin, lutropin, follitropin and gonadotropin.

It localises to the secreted. The protein is Lutropin subunit beta (lhb) of Aquarana catesbeiana (American bullfrog).